A 186-amino-acid chain; its full sequence is Orotate phosphoribosyltransferase (186 aa).

Residues arginine 96, lysine 100, histidine 102, and 121-129 (DDVATTGTS) contribute to the 5-phospho-alpha-D-ribose 1-diphosphate site. The orotate site is built by threonine 125 and arginine 153.

This sequence belongs to the purine/pyrimidine phosphoribosyltransferase family. PyrE subfamily. In terms of assembly, homodimer. The cofactor is Mg(2+).

The enzyme catalyses orotidine 5'-phosphate + diphosphate = orotate + 5-phospho-alpha-D-ribose 1-diphosphate. Its pathway is pyrimidine metabolism; UMP biosynthesis via de novo pathway; UMP from orotate: step 1/2. Functionally, catalyzes the transfer of a ribosyl phosphate group from 5-phosphoribose 1-diphosphate to orotate, leading to the formation of orotidine monophosphate (OMP). The polypeptide is Orotate phosphoribosyltransferase (Aeropyrum pernix (strain ATCC 700893 / DSM 11879 / JCM 9820 / NBRC 100138 / K1)).